The following is a 485-amino-acid chain: UDP-N-acetylmuramoyl-L-alanyl-D-glutamate--2,6-diaminopimelate ligase (485 aa).

Position 30 (Ser30) interacts with UDP-N-acetyl-alpha-D-muramoyl-L-alanyl-D-glutamate. Residue 111 to 117 participates in ATP binding; that stretch reads GTNGKTT. Residues 153-154, Ser180, Gln186, and Arg188 each bind UDP-N-acetyl-alpha-D-muramoyl-L-alanyl-D-glutamate; that span reads TT. Position 220 is an N6-carboxylysine (Lys220). Meso-2,6-diaminopimelate is bound by residues Arg378, 402-405, Gly455, and Glu459; that span reads DNPR. A Meso-diaminopimelate recognition motif motif is present at residues 402-405; that stretch reads DNPR.

Belongs to the MurCDEF family. MurE subfamily. Mg(2+) serves as cofactor. Carboxylation is probably crucial for Mg(2+) binding and, consequently, for the gamma-phosphate positioning of ATP.

The protein localises to the cytoplasm. It carries out the reaction UDP-N-acetyl-alpha-D-muramoyl-L-alanyl-D-glutamate + meso-2,6-diaminopimelate + ATP = UDP-N-acetyl-alpha-D-muramoyl-L-alanyl-gamma-D-glutamyl-meso-2,6-diaminopimelate + ADP + phosphate + H(+). It participates in cell wall biogenesis; peptidoglycan biosynthesis. Its function is as follows. Catalyzes the addition of meso-diaminopimelic acid to the nucleotide precursor UDP-N-acetylmuramoyl-L-alanyl-D-glutamate (UMAG) in the biosynthesis of bacterial cell-wall peptidoglycan. This Bacteroides fragilis (strain ATCC 25285 / DSM 2151 / CCUG 4856 / JCM 11019 / LMG 10263 / NCTC 9343 / Onslow / VPI 2553 / EN-2) protein is UDP-N-acetylmuramoyl-L-alanyl-D-glutamate--2,6-diaminopimelate ligase.